Here is a 66-residue protein sequence, read N- to C-terminus: Phylloseptin-H5 (66 aa).

A signal peptide spans 1 to 22 (MAFLKKSLFLVLFLGLVSLSIC). A propeptide spanning residues 23–44 (EEEKRETEEEENEQEDDDKSEE) is cleaved from the precursor. The tract at residues 24–44 (EEKRETEEEENEQEDDDKSEE) is disordered. Over residues 30–41 (EEEENEQEDDDK) the composition is skewed to acidic residues. A Phenylalanine amide modification is found at Phe-65.

Expressed by the skin glands.

The protein resides in the secreted. In terms of biological role, has antibacterial activity against the Gram-negative bacteria E.coli and P.aeruginosa, and the Gram-positive bacterium S.aureus. No hemolytic activity. In Pithecopus hypochondrialis (Orange-legged leaf frog), this protein is Phylloseptin-H5 (psn7).